We begin with the raw amino-acid sequence, 438 residues long: Minor myo-inositol transporter IolF (438 aa).

12 helical membrane-spanning segments follow: residues 15 to 35, 49 to 69, 86 to 106, 108 to 128, 147 to 167, 171 to 191, 230 to 250, 268 to 288, 295 to 312, 317 to 334, 359 to 379, and 387 to 407; these read IAAA…SAGL, IGLL…ALLG, MLVY…PMLL, GYII…TIIA, WAAG…LGLL, IVFA…IRLP, ILFL…MGFF, LLQM…FMPF, TVFG…TLFL, GLPI…NNGA, LMFF…PMII, and MAAI…LFAP.

This sequence belongs to the major facilitator superfamily. Sugar transporter (TC 2.A.1.1) family.

It localises to the cell membrane. Its pathway is polyol metabolism; myo-inositol degradation into acetyl-CoA. Functionally, minor myo-inositol uptake transporter. The sequence is that of Minor myo-inositol transporter IolF (iolF) from Bacillus subtilis (strain 168).